Here is a 210-residue protein sequence, read N- to C-terminus: MVMGLIGRKVGMTRIVAGDGRVLPVTVIHVAPNTVAQVKDIATDGYCAVQVATGTRRPQRVTSALAGHFRKNGIAPGRLLREFRVADTANYACGMDIDLDIFAEGQRVDVSGVSKGKGFAGAIKRHNFRSNRASHGNSLSHRAPGSIGCRQTPGRVFKGKKMAGHLGAEQVTTLNLELVRIDANRRLLMIKGAVPGARDGDVMIRPAVRG.

The segment covering 131 to 140 (NRASHGNSLS) has biased composition (polar residues). Residues 131-150 (NRASHGNSLSHRAPGSIGCR) are disordered. Gln-151 carries the post-translational modification N5-methylglutamine.

Belongs to the universal ribosomal protein uL3 family. In terms of assembly, part of the 50S ribosomal subunit. Forms a cluster with proteins L14 and L19. Post-translationally, methylated by PrmB.

Its function is as follows. One of the primary rRNA binding proteins, it binds directly near the 3'-end of the 23S rRNA, where it nucleates assembly of the 50S subunit. In Acidithiobacillus ferrooxidans (strain ATCC 23270 / DSM 14882 / CIP 104768 / NCIMB 8455) (Ferrobacillus ferrooxidans (strain ATCC 23270)), this protein is Large ribosomal subunit protein uL3.